The chain runs to 633 residues: MTEEACRTRSQKRALERDPTEDDVESKKIKMERGLLASDLNTDGDMRVTPEPGAGPTQGLLRATEATAMAMGRGEGLVGDGPVDMRTSHSDMKSERRPPSPDVIVLSDNEQPSSPRVNGLTTVALKETSTEALMKSSPEERERMIKQLKEELRLEEAKLVLLKKLRQSQIQKEATAQKPTGSVGSTVTTPPPLVRGTQNIPAGKPSLQTSSARMPGSVIPPPLVRGGQQASSKLGPQASSQVVMPPLVRGAQQIHSIRQHSSTGPPPLLLAPRASVPSVQIQGQRIIQQGLIRVANVPNTSLLVNIPQPTPASLKGTTATSAQANSTPTSVASVVTSAESPASRQAAAKLALRKQLEKTLLEIPPPKPPAPEMNFLPSAANNEFIYLVGLEEVVQNLLETQGRMSAATVLSREPYMCAQCKTDFTCRWREEKSGAIMCENCMTTNQKKALKVEHTSRLKAAFVKALQQEQEIEQRLLQQGTAPAQAKAEPTAAPHPVLKQVIKPRRKLAFRSGEARDWSNGAVLQASSQLSRGSATTPRGVLHTFSPSPKLQNSASATALVSRTGRHSERTVSAGKGSATSNWKKTPLSTGGTLAFVSPSLAVHKSSSAVDRQREYLLDMIPPRSIPQSATWK.

Positions 1-18 (MTEEACRTRSQKRALERD) are enriched in basic and acidic residues. 2 disordered regions span residues 1 to 59 (MTEE…PTQG) and 73 to 119 (RGEG…RVNG). Residues T20 and T49 each carry the phosphothreonine modification. Positions 86 to 99 (RTSHSDMKSERRPP) are enriched in basic and acidic residues. K93 participates in a covalent cross-link: Glycyl lysine isopeptide (Lys-Gly) (interchain with G-Cter in SUMO2). S100, S107, S113, S114, and S137 each carry phosphoserine. The segment covering 108 to 119 (DNEQPSSPRVNG) has biased composition (polar residues). Positions 139–174 (EERERMIKQLKEELRLEEAKLVLLKKLRQSQIQKEA) form a coiled coil. Positions 144–178 (MIKQLKEELRLEEAKLVLLKKLRQSQIQKEATAQK) are CR1; interaction with HDAC1, HDAC2, MBD2 and MTA2. The segment covering 172–188 (KEATAQKPTGSVGSTVT) has biased composition (polar residues). A disordered region spans residues 172–238 (KEATAQKPTG…QASSKLGPQA (67 aa)). Residue K178 forms a Glycyl lysine isopeptide (Lys-Gly) (interchain with G-Cter in SUMO2) linkage. The interval 181-295 (GSVGSTVTTP…IIQQGLIRVA (115 aa)) is interaction with ZMYND8. Position 189 is a phosphothreonine (T189). A compositionally biased stretch (polar residues) spans 196 to 212 (GTQNIPAGKPSLQTSSA). A Glycyl lysine isopeptide (Lys-Gly) (interchain with G-Cter in SUMO2) cross-link involves residue K204. An Omega-N-methylarginine modification is found at R225. The segment covering 228–238 (QQASSKLGPQA) has biased composition (polar residues). Residue K233 forms a Glycyl lysine isopeptide (Lys-Gly) (interchain with G-Cter in SUMO2) linkage. Omega-N-methylarginine is present on residues R249, R258, and R273. S275 is subject to Phosphoserine. Omega-N-methylarginine is present on R285. Phosphoserine occurs at positions 340 and 343. A CR2; histone tail-binding and interaction with CHD4 and CDK2AP1 region spans residues 340 to 480 (SPASRQAAAK…EIEQRLLQQG (141 aa)). The segment at 411–464 (SREPYMCAQCKTDFTCRWREEKSGAIMCENCMTTNQKKALKVEHTSRLKAAFVK) adopts a GATA-type zinc-finger fold. Glycyl lysine isopeptide (Lys-Gly) (interchain with G-Cter in SUMO2) cross-links involve residues K464 and K487. S512 is subject to Phosphoserine. The residue at position 539 (R539) is an Asymmetric dimethylarginine; alternate. Position 539 is an omega-N-methylarginine; alternate (R539). 2 positions are modified to phosphoserine: S546 and S548. K550 participates in a covalent cross-link: Glycyl lysine isopeptide (Lys-Gly) (interchain with G-Cter in SUMO2). A Phosphoserine modification is found at S556. The tract at residues 561–585 (VSRTGRHSERTVSAGKGSATSNWKK) is disordered. K585 is covalently cross-linked (Glycyl lysine isopeptide (Lys-Gly) (interchain with G-Cter in SUMO2)). The residue at position 598 (S598) is a Phosphoserine. Residue K605 forms a Glycyl lysine isopeptide (Lys-Gly) (interchain with G-Cter in SUMO2) linkage.

Homooligomer. Component of the nucleosome remodeling and deacetylase (NuRD) repressor complex, composed of core proteins MTA1, MTA2, MTA3, RBBP4, RBBP7, HDAC1, HDAC2, MBD2, MBD3, and peripherally associated proteins CDK2AP1, CDK2AP2, GATAD2A, GATAD2B, CHD3, CHD4 and CHD5. The exact stoichiometry of the NuRD complex is unknown, and some subunits such as MBD2 and MBD3, GATAD2A and GATAD2B, and CHD3, CHD4 and CHD5 define mutually exclusive NuRD complexes. Component of the MeCP1 histone deacetylase complex. Interacts with CDK2AP1. Interacts with CHD4. Interacts with ERCC6. Interacts with HDAC1. Interacts with HDAC2. Interacts with MBD2; this interaction is required for the enhancement of MBD2-mediated repression and for targeting to the chromatin. Interacts with MBD3. Interacts with MTA2. Interacts with ZMYND8. Interacts with histone tails, including that of histones H2A, H2B, H3 and H4, the interaction is reduced by histone acetylation. Ubiquitous, both in fetal and adult tissues.

The protein resides in the nucleus speckle. The protein localises to the nucleus. It is found in the chromosome. Functionally, transcriptional repressor. Acts as a component of the histone deacetylase NuRD complex which participates in the remodeling of chromatin. Enhances MBD2-mediated repression. Efficient repression requires the presence of GATAD2B. The protein is Transcriptional repressor p66-alpha (GATAD2A) of Homo sapiens (Human).